We begin with the raw amino-acid sequence, 332 residues long: UPF0194 membrane protein YbhG (332 aa).

A signal peptide spans 1 to 16 (MMKKPVVIGLAVVVLA). Residues 108 to 209 (EEIAQAAAAV…LNLQDSTLIA (102 aa)) are a coiled coil.

Belongs to the UPF0194 family.

It is found in the periplasm. The chain is UPF0194 membrane protein YbhG from Shigella boydii serotype 4 (strain Sb227).